We begin with the raw amino-acid sequence, 193 residues long: Large ribosomal subunit protein uL18 (193 aa).

The protein belongs to the universal ribosomal protein uL18 family. As to quaternary structure, part of the 50S ribosomal subunit. Contacts the 5S and 23S rRNAs.

Its function is as follows. This is one of the proteins that bind and probably mediate the attachment of the 5S RNA into the large ribosomal subunit, where it forms part of the central protuberance. The chain is Large ribosomal subunit protein uL18 from Methanococcus maripaludis (strain C6 / ATCC BAA-1332).